A 664-amino-acid polypeptide reads, in one-letter code: Transketolase 1 (664 aa).

H26 contacts substrate. Thiamine diphosphate is bound by residues H66 and 114–116 (GPL). D155 contacts Mg(2+). Thiamine diphosphate-binding residues include G156 and N185. Mg(2+) contacts are provided by N185 and I187. H260, R357, and S384 together coordinate substrate. H260 contacts thiamine diphosphate. Residue E411 is the Proton donor of the active site. F437 is a binding site for thiamine diphosphate. H461, D469, and R520 together coordinate substrate.

The protein belongs to the transketolase family. In terms of assembly, homodimer. It depends on Mg(2+) as a cofactor. Ca(2+) serves as cofactor. Mn(2+) is required as a cofactor. The cofactor is Co(2+). Requires thiamine diphosphate as cofactor.

The catalysed reaction is D-sedoheptulose 7-phosphate + D-glyceraldehyde 3-phosphate = aldehydo-D-ribose 5-phosphate + D-xylulose 5-phosphate. Functionally, catalyzes the transfer of a two-carbon ketol group from a ketose donor to an aldose acceptor, via a covalent intermediate with the cofactor thiamine pyrophosphate. This chain is Transketolase 1 (tkt1), found in Aliivibrio fischeri (strain ATCC 700601 / ES114) (Vibrio fischeri).